Reading from the N-terminus, the 424-residue chain is C4-dicarboxylate transport protein (424 aa).

The next 8 helical transmembrane spans lie at 4–24 (SLFK…VLLG), 44–64 (LIKM…IAGM), 76–96 (VALI…LVVV), 142–162 (IGAF…LFGF), 184–206 (VFFG…AMAF), 222–242 (LIVC…GLIA), 326–346 (IWHQ…AAGV), and 352–372 (IVLA…LALI).

This sequence belongs to the dicarboxylate/amino acid:cation symporter (DAACS) (TC 2.A.23) family.

Its subcellular location is the cell inner membrane. Functionally, responsible for the transport of dicarboxylates such as succinate, fumarate, and malate from the periplasm across the membrane. This is C4-dicarboxylate transport protein from Erwinia tasmaniensis (strain DSM 17950 / CFBP 7177 / CIP 109463 / NCPPB 4357 / Et1/99).